The sequence spans 445 residues: Phosphoglucosamine mutase (445 aa).

The Phosphoserine intermediate role is filled by serine 105. Mg(2+) is bound by residues serine 105, aspartate 244, aspartate 246, and aspartate 248. The residue at position 105 (serine 105) is a Phosphoserine.

It belongs to the phosphohexose mutase family. Requires Mg(2+) as cofactor. Post-translationally, activated by phosphorylation.

The enzyme catalyses alpha-D-glucosamine 1-phosphate = D-glucosamine 6-phosphate. Its function is as follows. Catalyzes the conversion of glucosamine-6-phosphate to glucosamine-1-phosphate. This is Phosphoglucosamine mutase from Janthinobacterium sp. (strain Marseille) (Minibacterium massiliensis).